We begin with the raw amino-acid sequence, 637 residues long: GTPase-activating protein GYP1 (637 aa).

Basic and acidic residues predominate over residues 1–17; sequence MGVRSAAKEMHERDHNS. Disordered regions lie at residues 1 to 152 and 187 to 233; these read MGVR…GDRY and RTLS…NDSK. Over residues 18–27 the composition is skewed to polar residues; the sequence is DSSSLVTSLM. Residues 28–45 show a composition bias toward low complexity; sequence KSWRISSASSSKKPSLYK. The segment covering 46 to 59 has biased composition (polar residues); it reads MNTTESTSLPSGYA. Residue S69 is modified to Phosphoserine. Composition is skewed to polar residues over residues 79 to 91 and 98 to 107; these read QQASTRRTSNSYS and PTLSTASNES. The span at 115 to 127 shows a compositional bias: basic residues; it reads RQHHQRHHHHQQP. Composition is skewed to low complexity over residues 128–142 and 187–207; these read RHSSSGSVGNNCSNS and RTLSRKSTSSSINSISNMGTS. Positions 208–223 are enriched in polar residues; that stretch reads AVRNSSSSFTYPQLPQ. S250 bears the Phosphoserine mark. In terms of domain architecture, Rab-GAP TBC spans 280-508; the sequence is GIPKIHRPVV…RMWDTYLSET (229 aa). The tract at residues 543 to 564 is disordered; sequence DFQSPTTALSNMTPNNAVEDSG.

It is found in the golgi apparatus. The protein resides in the golgi stack. Functionally, GTPase-activating protein (GAP) that stimulates specifically the intrinsic GTPase activity of Ypt/Rab-type GTPases YPT1 and YPT7. Functions on the Golgi as a negative regulator of YPT1. Functions on the vacuole as a negative regulator of YPT7. It is also active on SEC4 and YPT51. Provides a catalytic arginine (arginine finger) and glutamine (glutamine finger) in trans to accelerate the GTP hydrolysis rate of the substrate GTPase. The chain is GTPase-activating protein GYP1 (GYP1) from Saccharomyces cerevisiae (strain ATCC 204508 / S288c) (Baker's yeast).